The sequence spans 330 residues: Calponin-3 (330 aa).

Lysine 23 carries the post-translational modification N6-acetyllysine. A Calponin-homology (CH) domain is found at 26–130; the sequence is QQAEEDLRNW…TLVALAGLAK (105 aa). An N6-methyllysine modification is found at lysine 158. Calponin-like repeat units lie at residues 164-189, 204-229, and 243-268; these read IGLQMGTNKCASQAGMTAYGTRRHLY, ISLQMGTNKGASQAGMLAPGTRRDIY, and ISLQMGTNKVASQKGMSVYGLGRQVY. The disordered stretch occupies residues 279 to 330; it reads PVIHNGSQGTGTNGSEISDSDYQAEYPDEYHGEYPDDYPREYQYGDDQGIDY. The segment covering 306 to 318 has biased composition (basic and acidic residues); sequence DEYHGEYPDDYPR.

This sequence belongs to the calponin family.

In terms of biological role, thin filament-associated protein that is implicated in the regulation and modulation of smooth muscle contraction. It is capable of binding to actin, calmodulin and tropomyosin. The interaction of calponin with actin inhibits the actomyosin Mg-ATPase activity. This Mus musculus (Mouse) protein is Calponin-3 (Cnn3).